A 480-amino-acid polypeptide reads, in one-letter code: RNA-binding protein 42 (480 aa).

The tract at residues 1-30 (MAGAGPAPGLPGAGGPVVPGPGAGIPGKSG) is disordered. Residue alanine 2 is modified to N-acetylalanine. Residues 11-27 (PGAGGPVVPGPGAGIPG) are compositionally biased toward gly residues. Phosphoserine is present on serine 135. Asymmetric dimethylarginine occurs at positions 153, 158, 168, and 181. The tract at residues 236 to 480 (ELGLGLGLGL…QKEKKKLGLR (245 aa)) is necessary for interaction with HNRNPK. Residues 319–356 (SLRPRPRPPRPEPPPGLMALEVPEPLGEDKKKGKPEKL) are disordered. Basic and acidic residues predominate over residues 345 to 356 (GEDKKKGKPEKL). An RRM domain is found at 381–459 (FRIFCGDLGN…RPIKLRKSMW (79 aa)).

This sequence belongs to the RRM RBM42 family. As to quaternary structure, interacts with HNRNPK.

It localises to the nucleus. Its subcellular location is the cytoplasm. Its function is as follows. Binds (via the RRM domain) to the 3'-untranslated region (UTR) of CDKN1A mRNA. The sequence is that of RNA-binding protein 42 (RBM42) from Homo sapiens (Human).